The primary structure comprises 185 residues: Ribosome-recycling factor (185 aa).

It belongs to the RRF family.

It localises to the cytoplasm. Its function is as follows. Responsible for the release of ribosomes from messenger RNA at the termination of protein biosynthesis. May increase the efficiency of translation by recycling ribosomes from one round of translation to another. The chain is Ribosome-recycling factor from Shewanella pealeana (strain ATCC 700345 / ANG-SQ1).